Consider the following 500-residue polypeptide: Lysine--tRNA ligase (500 aa).

Residues Glu-410 and Glu-417 each coordinate Mg(2+).

Belongs to the class-II aminoacyl-tRNA synthetase family. In terms of assembly, homodimer. Requires Mg(2+) as cofactor.

The protein localises to the cytoplasm. It carries out the reaction tRNA(Lys) + L-lysine + ATP = L-lysyl-tRNA(Lys) + AMP + diphosphate. This is Lysine--tRNA ligase from Pseudomonas putida (strain W619).